We begin with the raw amino-acid sequence, 321 residues long: Peptidase 1 (321 aa).

A signal peptide spans 1 to 18 (MKFVLAIASLLVLSTVYA). Positions 19 to 98 (RPASIKTFEE…LKTQFDLNAE (80 aa)) are cleaved as a propeptide — activation peptide. 3 cysteine pairs are disulfide-bonded: Cys-102-Cys-216, Cys-130-Cys-170, and Cys-164-Cys-202. The active site involves Cys-133. N-linked (GlcNAc...) asparagine glycosylation is present at Asn-151. Active-site residues include His-269 and Arg-288.

This sequence belongs to the peptidase C1 family. As to quaternary structure, monomer.

It is found in the secreted. It carries out the reaction Broad endopeptidase specificity.. Its function is as follows. Thiol protease that hydrolyzes proteins, with a preference for Phe or basic residues. The polypeptide is Peptidase 1 (DERF1) (Dermatophagoides farinae (American house dust mite)).